A 252-amino-acid chain; its full sequence is MSDWNPSLYLHFAAERSRPAMELLARVPLENIEYVADLGCGPGNSTALLHQRWPAARITGIDSSPAMIAEARSALPDCQFVEADIRNWQPEQALDLIFANASLQWLPDHYELFPHLVSLLNSHGVLAVQMPDNWLEPTHVLMREVAWEQNYPDRGREPLAGVHAYYDILSEAGCEVDIWRTTYYHQMPSHQAIIDWVTATGLRPWLQDLTESEQQHFLTRYHQMLEEQYPLQENGEILLAFPRLFIVARRTE.

It belongs to the methyltransferase superfamily. Tam family.

The protein resides in the cytoplasm. It catalyses the reaction trans-aconitate + S-adenosyl-L-methionine = (E)-3-(methoxycarbonyl)pent-2-enedioate + S-adenosyl-L-homocysteine. Catalyzes the S-adenosylmethionine monomethyl esterification of trans-aconitate. The sequence is that of Trans-aconitate 2-methyltransferase from Escherichia coli O7:K1 (strain IAI39 / ExPEC).